An 80-amino-acid chain; its full sequence is Exodeoxyribonuclease 7 small subunit (80 aa).

Belongs to the XseB family. As to quaternary structure, heterooligomer composed of large and small subunits.

It localises to the cytoplasm. It carries out the reaction Exonucleolytic cleavage in either 5'- to 3'- or 3'- to 5'-direction to yield nucleoside 5'-phosphates.. Functionally, bidirectionally degrades single-stranded DNA into large acid-insoluble oligonucleotides, which are then degraded further into small acid-soluble oligonucleotides. This Rickettsia canadensis (strain McKiel) protein is Exodeoxyribonuclease 7 small subunit.